The chain runs to 611 residues: Pescadillo homolog (611 aa).

The disordered stretch occupies residues 310–335 (VQMGDPDEASPGEEEQFVAHASKSAP). Over residues 314–325 (DPDEASPGEEEQ) the composition is skewed to acidic residues. The BRCT domain occupies 354 to 455 (PSSRLFAPYT…KILLEDTYAQ (102 aa)). Disordered regions lie at residues 469–506 (YEGA…ESNT) and 545–611 (VKKA…AGGK). The span at 482-498 (ADMDVETDGEEGEADAS) shows a compositional bias: acidic residues. Composition is skewed to basic and acidic residues over residues 552 to 569 (KKPD…KDMN) and 579 to 602 (KLYE…EQRK). Positions 580 to 609 (LYEKMKYSQQKKAAEKEKLEQRKKQLQKAG) form a coiled coil.

It belongs to the pescadillo family. As to quaternary structure, component of the NOP7 complex, composed of ERB1, NOP7 and YTM1. The complex is held together by ERB1, which interacts with NOP7 via its N-terminal domain and with YTM1 via a high-affinity interaction between the seven-bladed beta-propeller domains of the 2 proteins. The NOP7 complex associates with the 66S pre-ribosome.

It localises to the nucleus. It is found in the nucleolus. The protein localises to the nucleoplasm. Component of the NOP7 complex, which is required for maturation of the 25S and 5.8S ribosomal RNAs and formation of the 60S ribosome. This Coprinopsis cinerea (strain Okayama-7 / 130 / ATCC MYA-4618 / FGSC 9003) (Inky cap fungus) protein is Pescadillo homolog.